Reading from the N-terminus, the 117-residue chain is Glycine cleavage system H-like protein (117 aa).

The Lipoyl-binding domain maps to 21 to 103 (IVRLGLSSRM…ESEGWFVVLQ (83 aa)). N6-lipoyllysine is present on Lys-62.

It belongs to the GcvH family. Requires (R)-lipoate as cofactor.

In Chlamydia muridarum (strain MoPn / Nigg), this protein is Glycine cleavage system H-like protein.